Reading from the N-terminus, the 263-residue chain is Oxidoreductase UcpA (263 aa).

Residue 10 to 32 (LITGASQGIGEGIARVFARHGAN) coordinates NAD(+). Residue serine 141 participates in substrate binding. The active-site Proton acceptor is tyrosine 155.

The protein belongs to the short-chain dehydrogenases/reductases (SDR) family.

The protein is Oxidoreductase UcpA (ucpA) of Salmonella typhi.